We begin with the raw amino-acid sequence, 105 residues long: Large ribosomal subunit protein uL24 (105 aa).

The protein belongs to the universal ribosomal protein uL24 family. As to quaternary structure, part of the 50S ribosomal subunit.

One of two assembly initiator proteins, it binds directly to the 5'-end of the 23S rRNA, where it nucleates assembly of the 50S subunit. In terms of biological role, one of the proteins that surrounds the polypeptide exit tunnel on the outside of the subunit. The chain is Large ribosomal subunit protein uL24 from Beijerinckia indica subsp. indica (strain ATCC 9039 / DSM 1715 / NCIMB 8712).